The following is a 350-amino-acid chain: Anthranilate phosphoribosyltransferase (350 aa).

Residues G88, G91 to D92, T96, N98 to T101, K116 to S124, and S128 each bind 5-phospho-alpha-D-ribose 1-diphosphate. Residue G88 coordinates anthranilate. A Mg(2+)-binding site is contributed by S100. Position 174 (R174) interacts with anthranilate. Residues D233 and E234 each contribute to the Mg(2+) site.

This sequence belongs to the anthranilate phosphoribosyltransferase family. Homodimer. Requires Mg(2+) as cofactor.

It carries out the reaction N-(5-phospho-beta-D-ribosyl)anthranilate + diphosphate = 5-phospho-alpha-D-ribose 1-diphosphate + anthranilate. Its pathway is amino-acid biosynthesis; L-tryptophan biosynthesis; L-tryptophan from chorismate: step 2/5. Functionally, catalyzes the transfer of the phosphoribosyl group of 5-phosphorylribose-1-pyrophosphate (PRPP) to anthranilate to yield N-(5'-phosphoribosyl)-anthranilate (PRA). The chain is Anthranilate phosphoribosyltransferase from Albidiferax ferrireducens (strain ATCC BAA-621 / DSM 15236 / T118) (Rhodoferax ferrireducens).